Reading from the N-terminus, the 477-residue chain is Pentatricopeptide repeat-containing protein At1g55630 (477 aa).

PPR repeat units follow at residues 151-185, 186-220, 221-255, 256-290, 291-325, 326-360, 361-395, 396-430, and 431-465; these read TANC…GYPT, TACT…NYRP, YKHS…GFTP, DVLT…GFSP, DLYT…GVEP, GVIH…GCTP, DVVC…GQLP, NVFT…GCNP, and NFVV…GHYV.

Belongs to the PPR family. P subfamily.

This is Pentatricopeptide repeat-containing protein At1g55630 from Arabidopsis thaliana (Mouse-ear cress).